The following is a 249-amino-acid chain: 2,3-bisphosphoglycerate-dependent phosphoglycerate mutase (249 aa).

Substrate-binding positions include arginine 9–asparagine 16, threonine 22–glycine 23, arginine 61, glutamate 88–tyrosine 91, lysine 99, arginine 115–arginine 116, and glycine 184–asparagine 185. The active-site Tele-phosphohistidine intermediate is histidine 10. The Proton donor/acceptor role is filled by glutamate 88.

Belongs to the phosphoglycerate mutase family. BPG-dependent PGAM subfamily. Homodimer.

The enzyme catalyses (2R)-2-phosphoglycerate = (2R)-3-phosphoglycerate. The protein operates within carbohydrate degradation; glycolysis; pyruvate from D-glyceraldehyde 3-phosphate: step 3/5. Catalyzes the interconversion of 2-phosphoglycerate and 3-phosphoglycerate. The protein is 2,3-bisphosphoglycerate-dependent phosphoglycerate mutase of Xanthomonas campestris pv. campestris (strain 8004).